A 424-amino-acid chain; its full sequence is Kynureninase (424 aa).

Residues Leu105, Ser106, 133–136 (FPTD), Asp218, His221, and Tyr243 each bind pyridoxal 5'-phosphate. Position 244 is an N6-(pyridoxal phosphate)lysine (Lys244). Positions 274 and 302 each coordinate pyridoxal 5'-phosphate.

Belongs to the kynureninase family. In terms of assembly, homodimer. It depends on pyridoxal 5'-phosphate as a cofactor.

It carries out the reaction L-kynurenine + H2O = anthranilate + L-alanine + H(+). The enzyme catalyses 3-hydroxy-L-kynurenine + H2O = 3-hydroxyanthranilate + L-alanine + H(+). Its pathway is amino-acid degradation; L-kynurenine degradation; L-alanine and anthranilate from L-kynurenine: step 1/1. The protein operates within cofactor biosynthesis; NAD(+) biosynthesis; quinolinate from L-kynurenine: step 2/3. Its function is as follows. Catalyzes the cleavage of L-kynurenine (L-Kyn) and L-3-hydroxykynurenine (L-3OHKyn) into anthranilic acid (AA) and 3-hydroxyanthranilic acid (3-OHAA), respectively. This Stenotrophomonas maltophilia (strain K279a) protein is Kynureninase.